The sequence spans 499 residues: Neuropeptide CCHamide-1 receptor (499 aa).

Over 1 to 85 (MIANLVSMET…GRRPETYIVP (85 aa)) the chain is Extracellular. Residues Asn-33 and Asn-61 are each glycosylated (N-linked (GlcNAc...) asparagine). A helical membrane pass occupies residues 86 to 106 (ILFALIFVVGVLGNGTLIVVF). Over 107–117 (LSVRQMRNVPN) the chain is Cytoplasmic. The chain crosses the membrane as a helical span at residues 118-138 (TYILSLALADLLVIITTVPLA). The Extracellular segment spans residues 139–162 (STVYTVEYWPYGSFLCSLSEFMKD). A disulfide bridge links Cys-154 with Cys-240. The chain crosses the membrane as a helical span at residues 163–183 (VSIGVSVFTLTALSGDRYFAI). Residues 184–203 (VDPLRKFHAHGGGRRATRMT) lie on the Cytoplasmic side of the membrane. A helical membrane pass occupies residues 204 to 224 (LATAVSIWLLAILCGLPALIG). Residues 225–259 (SNLKHLGINEKSIVICYPYPEEWGINYAKSMVLLH) are Extracellular-facing. Residues 260-280 (FLVYYAIPLVVIAVFYVLIAL) form a helical membrane-spanning segment. The Cytoplasmic portion of the chain corresponds to 281–309 (HLMYSASVPGEIQGAVRQVRARRKVAVTV). A helical transmembrane segment spans residues 310–330 (LAFVVIFGICFLPYHVFFLWF). Residues 331–348 (YFWPTAQDDYNAFWHVLR) are Extracellular-facing. A helical transmembrane segment spans residues 349-369 (IVAYCMSFANSCANPVALYFV). The Cytoplasmic segment spans residues 370–499 (SGAFRKHFNR…PAKFQESLLN (130 aa)).

Belongs to the G-protein coupled receptor 1 family. Low levels in larval brain and gut with higher levels in adult brain and gut. In the brain expression is widely distributed, including strong expression in the mushroom bodies. Expressed weakly in s-LNv (small ventral lateral neurons) and strongly in l-LNv (large ventral lateral neurons), but not in other clock neurons.

It is found in the cell membrane. Its function is as follows. Receptor for the neuropeptide CCHamide-1. Plays a role in the modulation of starvation-induced olfactory behavior where starved flies show increased responsiveness to food odorants, repellants and pheromones. Contributes to regulation of sleep latency (the time required to fall asleep), amount of sleep and depth of sleep (arousability). Involved in modulation of PDP1 and PDF levels in s-LNv (small ventral lateral neurons) clock neurons in response to CCHa1 released by DN1a (anterior dorsal neurons 1) clock neurons, to regulate morning activity. In a subset of dopaminergic cells in the protocerebral anterior medial (PAM) cluster involved in suppressing arousability in response to CCHa1 secreted by gut enteroendocrine cells. The sequence is that of Neuropeptide CCHamide-1 receptor from Drosophila melanogaster (Fruit fly).